Here is a 118-residue protein sequence, read N- to C-terminus: Putative ankyrin repeat protein R747 (118 aa).

An ANK repeat occupies Asn70 to Arg99.

The sequence is that of Putative ankyrin repeat protein R747 from Acanthamoeba polyphaga (Amoeba).